A 259-amino-acid chain; its full sequence is UPF0246 protein PFLU_0992 (259 aa).

This sequence belongs to the UPF0246 family.

The polypeptide is UPF0246 protein PFLU_0992 (Pseudomonas fluorescens (strain SBW25)).